A 198-amino-acid polypeptide reads, in one-letter code: Putative manganese efflux pump MntP (198 aa).

A run of 6 helical transmembrane segments spans residues 3 to 23 (SIELLIIAVGLSMDAFAVAIC), 37 to 57 (VLTGCFFGGFQALMPLLGYLL), 65 to 85 (ITSIDHWIAFGLLSLIGINMI), 105 to 127 (SLTVMAFATSIDALAIGVTFAFL), 131 to 153 (IIPAVTMIGITTFTFSFLGVKIG), and 171 to 191 (ILIGMGCKILFDHLGVISFVF).

The protein belongs to the MntP (TC 9.B.29) family.

It is found in the cell membrane. Functionally, probably functions as a manganese efflux pump. This is Putative manganese efflux pump MntP from Acetivibrio thermocellus (strain ATCC 27405 / DSM 1237 / JCM 9322 / NBRC 103400 / NCIMB 10682 / NRRL B-4536 / VPI 7372) (Clostridium thermocellum).